The primary structure comprises 562 residues: Tissue-type plasminogen activator (562 aa).

Residues 1–19 form the signal peptide; the sequence is MYALKRELWCVLLLCGAIC. A propeptide spanning residues 20 to 32 is cleaved from the precursor; that stretch reads TSPSQETHRRLRR. Residues 33 to 35 constitute a propeptide, removed by plasmin; that stretch reads GVR. Residues 39–81 enclose the Fibronectin type-I domain; that stretch reads VTCRDEKTQMIYQQHQSWLRPLLRGNRVEHCWCNDGQTQCHSV. Intrachain disulfides connect Cys-41–Cys-71, Cys-69–Cys-78, Cys-86–Cys-97, Cys-91–Cys-108, Cys-110–Cys-119, Cys-127–Cys-208, Cys-148–Cys-190, Cys-179–Cys-203, Cys-215–Cys-296, Cys-236–Cys-278, Cys-267–Cys-291, Cys-299–Cys-430, Cys-342–Cys-358, Cys-350–Cys-419, Cys-444–Cys-519, Cys-476–Cys-492, and Cys-509–Cys-537. Residues 42 to 52 are important for binding to annexin A2; it reads RDEKTQMIYQQ. In terms of domain architecture, EGF-like spans 82–120; the sequence is PVKSCSEPRCFNGGTCLQAIYFSDFVCQCPVGFIGRQCE. An O-linked (Fuc) threonine glycan is attached at Thr-96. 2 consecutive Kringle domains span residues 126-208 and 214-296; these read TCYE…TPAC and ECYT…LPQC. A glycan (N-linked (GlcNAc...) asparagine) is linked at Asn-152. The Peptidase S1 domain maps to 311–561; the sequence is IKGGLYADIT…YLNWIRDNTR (251 aa). Active-site charge relay system residues include His-357 and Asp-406. The N-linked (GlcNAc...) asparagine glycan is linked to Asn-483. Ser-513 functions as the Charge relay system in the catalytic mechanism.

Belongs to the peptidase S1 family. As to quaternary structure, heterodimer of chain A and chain B held by a disulfide bond. Binds to fibrin with high affinity. This interaction leads to an increase in the catalytic efficiency of the enzyme due to an increase in affinity for plasminogen. Similarly, binding to heparin increases the activation of plasminogen. Binds to annexin A2, cytokeratin-8, fibronectin and laminin. Binds to mannose receptor and the low-density lipoprotein receptor-related protein (LRP1); these proteins are involved in TPA clearance. Binds LRP1B; binding is followed by internalization and degradation. Forms heterodimer with SERPINA5. Interacts with SERPINE1. In complex with SERPINE1, interacts with SORL1. In terms of processing, the single chain, almost fully active enzyme, can be further processed into a two-chain fully active form by a cleavage after Arg-310 catalyzed by plasmin, tissue kallikrein or factor Xa.

It localises to the secreted. The protein localises to the extracellular space. It catalyses the reaction Specific cleavage of Arg-|-Val bond in plasminogen to form plasmin.. Inhibited by SERPINA5. Inhibited by SERPINE1. In terms of biological role, converts the abundant, but inactive, zymogen plasminogen to plasmin by hydrolyzing a single Arg-Val bond in plasminogen. By controlling plasmin-mediated proteolysis, it plays an important role in tissue remodeling and degradation, in cell migration and many other physiopathological events. During oocyte activation, plays a role in cortical granule reaction in the zona reaction, which contributes to the block to polyspermy. This chain is Tissue-type plasminogen activator (PLAT), found in Sus scrofa (Pig).